A 309-amino-acid polypeptide reads, in one-letter code: Porphobilinogen deaminase (309 aa).

Position 242 is an S-(dipyrrolylmethanemethyl)cysteine (Cys242).

Belongs to the HMBS family. As to quaternary structure, monomer. It depends on dipyrromethane as a cofactor.

It catalyses the reaction 4 porphobilinogen + H2O = hydroxymethylbilane + 4 NH4(+). The protein operates within porphyrin-containing compound metabolism; protoporphyrin-IX biosynthesis; coproporphyrinogen-III from 5-aminolevulinate: step 2/4. In terms of biological role, tetrapolymerization of the monopyrrole PBG into the hydroxymethylbilane pre-uroporphyrinogen in several discrete steps. The sequence is that of Porphobilinogen deaminase from Shewanella woodyi (strain ATCC 51908 / MS32).